The sequence spans 380 residues: Queuine tRNA-ribosyltransferase (380 aa).

Catalysis depends on Asp93, which acts as the Proton acceptor. Substrate-binding positions include 93 to 97 (DSGGF), Asp147, Gln198, and Gly225. Residues 256-262 (GVGLPSN) are RNA binding. The Nucleophile role is filled by Asp275. An RNA binding; important for wobble base 34 recognition region spans residues 280-284 (ARNGR). Residues Cys313, Cys315, Cys318, and His344 each contribute to the Zn(2+) site.

This sequence belongs to the queuine tRNA-ribosyltransferase family. In terms of assembly, homodimer. Within each dimer, one monomer is responsible for RNA recognition and catalysis, while the other monomer binds to the replacement base PreQ1. Zn(2+) serves as cofactor.

The catalysed reaction is 7-aminomethyl-7-carbaguanine + guanosine(34) in tRNA = 7-aminomethyl-7-carbaguanosine(34) in tRNA + guanine. The protein operates within tRNA modification; tRNA-queuosine biosynthesis. Its function is as follows. Catalyzes the base-exchange of a guanine (G) residue with the queuine precursor 7-aminomethyl-7-deazaguanine (PreQ1) at position 34 (anticodon wobble position) in tRNAs with GU(N) anticodons (tRNA-Asp, -Asn, -His and -Tyr). Catalysis occurs through a double-displacement mechanism. The nucleophile active site attacks the C1' of nucleotide 34 to detach the guanine base from the RNA, forming a covalent enzyme-RNA intermediate. The proton acceptor active site deprotonates the incoming PreQ1, allowing a nucleophilic attack on the C1' of the ribose to form the product. After dissociation, two additional enzymatic reactions on the tRNA convert PreQ1 to queuine (Q), resulting in the hypermodified nucleoside queuosine (7-(((4,5-cis-dihydroxy-2-cyclopenten-1-yl)amino)methyl)-7-deazaguanosine). The protein is Queuine tRNA-ribosyltransferase of Clostridium perfringens (strain ATCC 13124 / DSM 756 / JCM 1290 / NCIMB 6125 / NCTC 8237 / Type A).